Consider the following 122-residue polypeptide: Phospholipase A2 homolog ECS_00014 (122 aa).

Disulfide bonds link Cys26–Cys115, Cys28–Cys44, Cys43–Cys95, Cys49–Cys122, Cys50–Cys88, Cys57–Cys81, and Cys75–Cys86. The interval 105–117 (KKYTYYPNFWCKG) is important for membrane-damaging activities in eukaryotes and bacteria; heparin-binding.

The protein belongs to the phospholipase A2 family. Group II subfamily. S49 sub-subfamily. As to quaternary structure, monomer. Expressed by the venom gland.

The protein resides in the secreted. In terms of biological role, snake venom phospholipase A2 homolog that lacks enzymatic activity. Shows high myotoxin activities and displays edema-inducing activities. Has cytotoxic activities against HUVEC cells (LC(50)=12.2 uL) and human lung adenocarcinoma A549 cells (LC(50)=8.5 uL). The protein is Phospholipase A2 homolog ECS_00014 of Echis carinatus sochureki (Saw-scaled viper).